We begin with the raw amino-acid sequence, 122 residues long: Large ribosomal subunit protein uL14c (122 aa).

It belongs to the universal ribosomal protein uL14 family. Part of the 50S ribosomal subunit.

It localises to the plastid. The protein resides in the chloroplast. Its function is as follows. Binds to 23S rRNA. The protein is Large ribosomal subunit protein uL14c of Pyropia yezoensis (Susabi-nori).